The primary structure comprises 352 residues: UDP-3-O-acylglucosamine N-acyltransferase (352 aa).

Residue H246 is the Proton acceptor of the active site.

This sequence belongs to the transferase hexapeptide repeat family. LpxD subfamily. As to quaternary structure, homotrimer.

The catalysed reaction is a UDP-3-O-[(3R)-3-hydroxyacyl]-alpha-D-glucosamine + a (3R)-hydroxyacyl-[ACP] = a UDP-2-N,3-O-bis[(3R)-3-hydroxyacyl]-alpha-D-glucosamine + holo-[ACP] + H(+). It participates in bacterial outer membrane biogenesis; LPS lipid A biosynthesis. In terms of biological role, catalyzes the N-acylation of UDP-3-O-acylglucosamine using 3-hydroxyacyl-ACP as the acyl donor. Is involved in the biosynthesis of lipid A, a phosphorylated glycolipid that anchors the lipopolysaccharide to the outer membrane of the cell. This Chlorobium luteolum (strain DSM 273 / BCRC 81028 / 2530) (Pelodictyon luteolum) protein is UDP-3-O-acylglucosamine N-acyltransferase.